A 1083-amino-acid chain; its full sequence is Error-prone DNA polymerase (1083 aa).

The protein belongs to the DNA polymerase type-C family. DnaE2 subfamily.

It localises to the cytoplasm. The enzyme catalyses DNA(n) + a 2'-deoxyribonucleoside 5'-triphosphate = DNA(n+1) + diphosphate. In terms of biological role, DNA polymerase involved in damage-induced mutagenesis and translesion synthesis (TLS). It is not the major replicative DNA polymerase. The chain is Error-prone DNA polymerase from Xanthomonas axonopodis pv. citri (strain 306).